The chain runs to 344 residues: Holliday junction branch migration complex subunit RuvB (344 aa).

The large ATPase domain (RuvB-L) stretch occupies residues 1 to 183 (MLDERLISSH…FGISCRLDFY (183 aa)). ATP-binding positions include Ile-22, Arg-23, Gly-64, Lys-67, Thr-68, Thr-69, 130–132 (EDY), Arg-173, Tyr-183, and Arg-220. Position 68 (Thr-68) interacts with Mg(2+). Residues 184-254 (TPLELSEIIL…LAKWALEMLE (71 aa)) are small ATPAse domain (RuvB-S). The head domain (RuvB-H) stretch occupies residues 257–344 (ECGLDVMDRM…LEGKGLFSDA (88 aa)). DNA is bound by residues Lys-312 and Arg-317.

It belongs to the RuvB family. As to quaternary structure, homohexamer. Forms an RuvA(8)-RuvB(12)-Holliday junction (HJ) complex. HJ DNA is sandwiched between 2 RuvA tetramers; dsDNA enters through RuvA and exits via RuvB. An RuvB hexamer assembles on each DNA strand where it exits the tetramer. Each RuvB hexamer is contacted by two RuvA subunits (via domain III) on 2 adjacent RuvB subunits; this complex drives branch migration. In the full resolvosome a probable DNA-RuvA(4)-RuvB(12)-RuvC(2) complex forms which resolves the HJ.

It is found in the cytoplasm. The enzyme catalyses ATP + H2O = ADP + phosphate + H(+). In terms of biological role, the RuvA-RuvB-RuvC complex processes Holliday junction (HJ) DNA during genetic recombination and DNA repair, while the RuvA-RuvB complex plays an important role in the rescue of blocked DNA replication forks via replication fork reversal (RFR). RuvA specifically binds to HJ cruciform DNA, conferring on it an open structure. The RuvB hexamer acts as an ATP-dependent pump, pulling dsDNA into and through the RuvAB complex. RuvB forms 2 homohexamers on either side of HJ DNA bound by 1 or 2 RuvA tetramers; 4 subunits per hexamer contact DNA at a time. Coordinated motions by a converter formed by DNA-disengaged RuvB subunits stimulates ATP hydrolysis and nucleotide exchange. Immobilization of the converter enables RuvB to convert the ATP-contained energy into a lever motion, pulling 2 nucleotides of DNA out of the RuvA tetramer per ATP hydrolyzed, thus driving DNA branch migration. The RuvB motors rotate together with the DNA substrate, which together with the progressing nucleotide cycle form the mechanistic basis for DNA recombination by continuous HJ branch migration. Branch migration allows RuvC to scan DNA until it finds its consensus sequence, where it cleaves and resolves cruciform DNA. The chain is Holliday junction branch migration complex subunit RuvB from Syntrophomonas wolfei subsp. wolfei (strain DSM 2245B / Goettingen).